Reading from the N-terminus, the 2138-residue chain is Non-reducing polyketide synthase rads2 (2138 aa).

Residues 11–249 (LIFGDQTDSW…NPLNIHALQH (239 aa)) form an N-terminal acylcarrier protein transacylase (SAT) domain region. One can recognise a Ketosynthase family 3 (KS3) domain in the interval 373-804 (SGRIAIVGMA…GGNACMLLED (432 aa)). Active-site for beta-ketoacyl synthase activity residues include C549, H684, and H724. Residues 901–1184 (VFVFGGQGSH…KGVCTSFVRA (284 aa)) form a malonyl-CoA:ACP transacylase (MAT) domain region. The active-site For acyl/malonyl transferase activity is the S992. The segment at 1291–1437 (AQYVVQESPS…KDVQRLQADW (147 aa)) is N-terminal hotdog fold. The region spanning 1291–1610 (AQYVVQESPS…FHEISNATLK (320 aa)) is the PKS/mFAS DH domain. Positions 1303–1607 (KKIQVTFRAS…GLEFHEISNA (305 aa)) are product template (PT) domain. Positions 1459–1610 (HGHRFQPDIF…FHEISNATLK (152 aa)) are C-terminal hotdog fold. The segment at 1618–1666 (SKSVLKPDNAAPLKAPEKKEDATPTAPKKSADPGKEEEEEGDTATPAAV) is disordered. In terms of domain architecture, Carrier spans 1666–1740 (VGEFEVIIQT…DLRRAFAMAP (75 aa)). S1700 carries the O-(pantetheine 4'-phosphoryl)serine modification. Residues 1740–1771 (PSSSSSTSASESVSESLDDSSSTSRSATPSSS) show a composition bias toward low complexity. 2 disordered regions span residues 1740 to 1781 (PSSS…GFVE) and 1807 to 1828 (QATKVQPQAPAATAADNDSSPA). A thioesterase (TE) domain region spans residues 1860 to 2006 (ADGTGSIATY…TRRHLGAMFS (147 aa)).

The protein operates within secondary metabolite biosynthesis. Non-reducing polyketide synthase; part of the gene cluster that mediates the biosynthesis of radicicol, a resorcylic acid lactone (RAL) that irreversibly inhibits the HSP90 molecular chaperone, an important target for cancer chemotherapy. The cluster encodes only two apparent post-PKS enzymes, a cytochrome P450 monooxygenase (radP) and a non-heme halogenase (radH) that introduce the epoxide and the chlorine, respectively. If this cluster includes all the genes required for radicicol biosynthesis, the remaining structural features of radicicol are presumably generated by the PKSs rads1 and rads2. The C-2' ketone could arise if the R-PKS rads1 and NR-PKS rads2 each carry out four iterations, in contrast to the five iteration-three iteration split for the hypothemycin PKSs. The origin of the cis 5',6' double bond is not known. The radicicol R-PKS rads1 ER domain may catalyze either double bond isomerization or reduction in the third iteration. This Floropilus chiversii (Chaetomium chiversii) protein is Non-reducing polyketide synthase rads2.